The sequence spans 71 residues: DNA-directed RNA polymerase subunit Rpo10 (71 aa).

Zn(2+) is bound by residues Cys6, Cys9, Cys52, and Cys53.

It belongs to the archaeal Rpo10/eukaryotic RPB10 RNA polymerase subunit family. Part of the RNA polymerase complex. Requires Zn(2+) as cofactor.

The protein resides in the cytoplasm. The enzyme catalyses RNA(n) + a ribonucleoside 5'-triphosphate = RNA(n+1) + diphosphate. Functionally, DNA-dependent RNA polymerase (RNAP) catalyzes the transcription of DNA into RNA using the four ribonucleoside triphosphates as substrates. The sequence is that of DNA-directed RNA polymerase subunit Rpo10 from Methanocella arvoryzae (strain DSM 22066 / NBRC 105507 / MRE50).